Here is a 314-residue protein sequence, read N- to C-terminus: uncharacterized protein (314 aa).

It belongs to the carbohydrate kinase PfkB family.

This is an uncharacterized protein from Buchnera aphidicola subsp. Schizaphis graminum (strain Sg).